The following is a 131-amino-acid chain: Small ribosomal subunit protein uS8 (131 aa).

This sequence belongs to the universal ribosomal protein uS8 family. As to quaternary structure, part of the 30S ribosomal subunit. Contacts proteins S5 and S12.

Functionally, one of the primary rRNA binding proteins, it binds directly to 16S rRNA central domain where it helps coordinate assembly of the platform of the 30S subunit. In Dechloromonas aromatica (strain RCB), this protein is Small ribosomal subunit protein uS8.